The chain runs to 346 residues: MMSDLTPIFRKYVAVIDDARNEQNGIDDHVERKQEDFGNSNETCEMFRDSFIKECARLLKFLVELNKVIKQIEKNYLDDFNMSDAEKDEFDMECRLQIQQYFKKFEFLENYEMERHNLSLKRFQSKSHRWSKILSNKNDNTKHVIHPQDIENGVYEFRLGVLRCLNLWIKYVSSKFTTIQQERLILENKMNFNSTPMPTLSNNADDFSADAIDISVSQSAPVETVQDEVKHYEETISKLTQEQLQVLETEHSELLNQKNEQLKKVETINKTILDIVNIQNELSNHLTVQSQNINLMLNNQDDIELNIKKGNKELRKAKRAAGRTAKMTTYGAIIMGVFILFLDYVG.

Residues 1 to 324 lie on the Cytoplasmic side of the membrane; sequence MMSDLTPIFR…RKAKRAAGRT (324 aa). One can recognise a t-SNARE coiled-coil homology domain in the interval 255–317; it reads LNQKNEQLKK…KKGNKELRKA (63 aa). A helical; Anchor for type IV membrane protein transmembrane segment spans residues 325-342; that stretch reads AKMTTYGAIIMGVFILFL. The Lumenal portion of the chain corresponds to 343-346; the sequence is DYVG.

It belongs to the syntaxin family. In terms of assembly, component of a SNARE complex consisting of UFE1, USE1, SEC20 and SEC22 or YKT6.

It localises to the endoplasmic reticulum membrane. Its function is as follows. Syntaxin required for targeting and fusion of Golgi-derived retrograde transport vesicles with the ER. In Saccharomyces cerevisiae (strain ATCC 204508 / S288c) (Baker's yeast), this protein is Syntaxin UFE1 (UFE1).